Consider the following 366-residue polypeptide: Ubiquitin carboxyl-terminal hydrolase 46 (366 aa).

The region spanning 35-365 is the USP domain; that stretch reads FGLVNFGNTC…SGYILFYQSR (331 aa). Catalysis depends on C44, which acts as the Nucleophile. C182, C185, C229, and C232 together coordinate Zn(2+). H313 (proton acceptor) is an active-site residue.

It belongs to the peptidase C19 family. USP12/USP46 subfamily. In terms of assembly, interacts with WDR48. Interacts with WDR20. Interacts with DMWD. Component of the USP46/WDR20/WDR48 deubiquitinating complex. As to expression, broadly expressed.

The protein resides in the cytoplasm. It catalyses the reaction Thiol-dependent hydrolysis of ester, thioester, amide, peptide and isopeptide bonds formed by the C-terminal Gly of ubiquitin (a 76-residue protein attached to proteins as an intracellular targeting signal).. Activated by interaction with WDR48. Functionally, deubiquitinating enzyme that plays a role in behavior, possibly by regulating GABA action. May act by mediating the deubiquitination of GAD1/GAD67. Has almost no deubiquitinating activity by itself and requires the interaction with WDR48 to have a high activity. Not involved in deubiquitination of monoubiquitinated FANCD2. The protein is Ubiquitin carboxyl-terminal hydrolase 46 (USP46) of Homo sapiens (Human).